A 263-amino-acid polypeptide reads, in one-letter code: Putative 2-aminoethylphosphonate transport system permease protein PhnV (263 aa).

The next 6 helical transmembrane spans lie at 13 to 33 (GVVASVLFIVFFFLPLAVILM), 69 to 89 (LTIGFCASLFALLCGVWAALA), 104 to 124 (VFYLPSAIPSVSVGLGILVAF), 131 to 151 (MNGTLWIVLTAHFVLISAFTF), 185 to 205 (LPLLMPWMVSELALSLSLSMG), and 233 to 253 (NIADGAALTIVLVAITLLLMM). Residues 65-253 (LLASLTIGFC…LVAITLLLMM (189 aa)) enclose the ABC transmembrane type-1 domain.

Belongs to the binding-protein-dependent transport system permease family.

The protein resides in the cell inner membrane. Probably part of the PhnSTUV complex (TC 3.A.1.11.5) involved in 2-aminoethylphosphonate import. Probably responsible for the translocation of the substrate across the membrane. This is Putative 2-aminoethylphosphonate transport system permease protein PhnV (phnV) from Salmonella typhi.